We begin with the raw amino-acid sequence, 133 residues long: ATP synthase epsilon chain, chloroplastic (133 aa).

It belongs to the ATPase epsilon chain family. As to quaternary structure, F-type ATPases have 2 components, CF(1) - the catalytic core - and CF(0) - the membrane proton channel. CF(1) has five subunits: alpha(3), beta(3), gamma(1), delta(1), epsilon(1). CF(0) has three main subunits: a, b and c.

It localises to the plastid. The protein resides in the chloroplast thylakoid membrane. In terms of biological role, produces ATP from ADP in the presence of a proton gradient across the membrane. In Psilotum nudum (Whisk fern), this protein is ATP synthase epsilon chain, chloroplastic.